The sequence spans 89 residues: MAAQIPESDQIKQFKEFLGTYNKLTETCFLDCVKDFTTREVKPEETTCSEHCLQKYLKMTQRISMRFQEYHIQQNEALAAKAGLLGQPR.

At Ala2 the chain carries N-acetylalanine. A Twin CX3C motif motif is present at residues 28–52 (CFLDCVKDFTTREVKPEETTCSEHC). Cystine bridges form between Cys28-Cys52 and Cys32-Cys48.

This sequence belongs to the small Tim family. In terms of assembly, heterohexamer; composed of 3 copies of TIMM9 and 3 copies of TIMM10/TIM10A, named soluble 70 kDa complex. The complex forms a 6-bladed alpha-propeller structure and associates with the TIMM22 component of the TIM22 complex. Interacts with multi-pass transmembrane proteins in transit. Also forms a complex composed of TIMM9, TIMM10/TIM10A and FXC1/TIM10B. Ubiquitous, with highest expression in heart, kidney, liver and skeletal muscle.

It is found in the mitochondrion inner membrane. Its function is as follows. Mitochondrial intermembrane chaperone that participates in the import and insertion of multi-pass transmembrane proteins into the mitochondrial inner membrane. May also be required for the transfer of beta-barrel precursors from the TOM complex to the sorting and assembly machinery (SAM complex) of the outer membrane. Acts as a chaperone-like protein that protects the hydrophobic precursors from aggregation and guide them through the mitochondrial intermembrane space. In Homo sapiens (Human), this protein is Mitochondrial import inner membrane translocase subunit Tim9 (TIMM9).